The chain runs to 512 residues: Sorting nexin MVP1 (512 aa).

A disordered region spans residues 1–24 (MDLEADPWRVNSEENGNNISGSVW). Over residues 13-22 (EENGNNISGS) the composition is skewed to low complexity. One can recognise a PX domain in the interval 130-248 (AEDIVSVEEI…LTFLTVPTDL (119 aa)). A 1,2-diacyl-sn-glycero-3-phospho-(1D-myo-inositol-3-phosphate) is bound by residues R174, S176, K200, and R215.

Belongs to the sorting nexin family.

It is found in the cytoplasm. The protein resides in the membrane. Required for vacuolar protein sorting. The sequence is that of Sorting nexin MVP1 (MVP1) from Kluyveromyces lactis (strain ATCC 8585 / CBS 2359 / DSM 70799 / NBRC 1267 / NRRL Y-1140 / WM37) (Yeast).